The following is a 386-amino-acid chain: Chorismate synthase (386 aa).

NADP(+) is bound by residues arginine 45 and arginine 51. FMN is bound by residues 131–133 (RTS), 251–252 (QG), serine 294, 309–313 (KPIPS), and arginine 335.

It belongs to the chorismate synthase family. In terms of assembly, homotetramer. The cofactor is FMNH2.

It carries out the reaction 5-O-(1-carboxyvinyl)-3-phosphoshikimate = chorismate + phosphate. Its pathway is metabolic intermediate biosynthesis; chorismate biosynthesis; chorismate from D-erythrose 4-phosphate and phosphoenolpyruvate: step 7/7. Its function is as follows. Catalyzes the anti-1,4-elimination of the C-3 phosphate and the C-6 proR hydrogen from 5-enolpyruvylshikimate-3-phosphate (EPSP) to yield chorismate, which is the branch point compound that serves as the starting substrate for the three terminal pathways of aromatic amino acid biosynthesis. This reaction introduces a second double bond into the aromatic ring system. The protein is Chorismate synthase of Clostridium tetani (strain Massachusetts / E88).